A 287-amino-acid chain; its full sequence is Shikimate dehydrogenase (NADP(+)) (287 aa).

Residues 20-22 (SRS) and T67 contribute to the shikimate site. K71 acts as the Proton acceptor in catalysis. E84 lines the NADP(+) pocket. Residues N93 and D108 each coordinate shikimate. Residues 132-136 (GAGGA), 156-161 (NRTAAR), and M226 contribute to the NADP(+) site. Shikimate is bound at residue Y228. G250 provides a ligand contact to NADP(+).

This sequence belongs to the shikimate dehydrogenase family. In terms of assembly, homodimer.

The catalysed reaction is shikimate + NADP(+) = 3-dehydroshikimate + NADPH + H(+). Its pathway is metabolic intermediate biosynthesis; chorismate biosynthesis; chorismate from D-erythrose 4-phosphate and phosphoenolpyruvate: step 4/7. In terms of biological role, involved in the biosynthesis of the chorismate, which leads to the biosynthesis of aromatic amino acids. Catalyzes the reversible NADPH linked reduction of 3-dehydroshikimate (DHSA) to yield shikimate (SA). This chain is Shikimate dehydrogenase (NADP(+)), found in Bordetella bronchiseptica (strain ATCC BAA-588 / NCTC 13252 / RB50) (Alcaligenes bronchisepticus).